We begin with the raw amino-acid sequence, 363 residues long: Probable cinnamyl alcohol dehydrogenase 6 (363 aa).

Position 51 (C51) interacts with Zn(2+). S53 contributes to the NADP(+) binding site. Zn(2+)-binding residues include H73, E74, C104, C107, C110, C118, and C167. NADP(+) contacts are provided by residues S171, G192–G197, S215–K220, T255, G279, and S302–I304.

Belongs to the zinc-containing alcohol dehydrogenase family. In terms of assembly, homodimer. The cofactor is Zn(2+). Expressed in the primary and lateral roots, and root caps. Expressed in the hypocotyl, cotyledon veins and hydathodes. In stems, expressed in the vascular cambium, interfascicular cambium and developing xylem. Expressed in the style, anthers, stamen filaments, vascular tissues of sepals, stigmatic regions in flowers, and abscission and style regions of siliques.

It catalyses the reaction (E)-cinnamyl alcohol + NADP(+) = (E)-cinnamaldehyde + NADPH + H(+). The enzyme catalyses (E)-coniferol + NADP(+) = (E)-coniferaldehyde + NADPH + H(+). The catalysed reaction is (E)-sinapyl alcohol + NADP(+) = (E)-sinapaldehyde + NADPH + H(+). It carries out the reaction (E)-4-coumaroyl alcohol + NADP(+) = (E)-4-coumaraldehyde + NADPH + H(+). It catalyses the reaction (E)-caffeyl alcohol + NADP(+) = (E)-caffeyl aldehyde + NADPH + H(+). It functions in the pathway aromatic compound metabolism; phenylpropanoid biosynthesis. Involved in lignin biosynthesis. Catalyzes the final step specific for the production of lignin monomers. Catalyzes the NADPH-dependent reduction of coniferaldehyde, 5-hydroxyconiferaldehyde, sinapaldehyde, 4-coumaraldehyde and caffeyl aldehyde to their respective alcohols. The protein is Probable cinnamyl alcohol dehydrogenase 6 (CAD6) of Arabidopsis thaliana (Mouse-ear cress).